A 197-amino-acid chain; its full sequence is 3-isopropylmalate dehydratase small subunit (197 aa).

It belongs to the LeuD family. LeuD type 1 subfamily. In terms of assembly, heterodimer of LeuC and LeuD.

It carries out the reaction (2R,3S)-3-isopropylmalate = (2S)-2-isopropylmalate. It participates in amino-acid biosynthesis; L-leucine biosynthesis; L-leucine from 3-methyl-2-oxobutanoate: step 2/4. In terms of biological role, catalyzes the isomerization between 2-isopropylmalate and 3-isopropylmalate, via the formation of 2-isopropylmaleate. The sequence is that of 3-isopropylmalate dehydratase small subunit from Streptomyces griseus subsp. griseus (strain JCM 4626 / CBS 651.72 / NBRC 13350 / KCC S-0626 / ISP 5235).